Here is a 101-residue protein sequence, read N- to C-terminus: Thrombin-like enzyme okinaxobin-1 (101 aa).

The signal sequence occupies residues 1-16; that stretch reads LIRVLANLLILQLSYA. A propeptide spanning residues 17 to 22 is cleaved from the precursor; it reads QKSSEL. In terms of domain architecture, Peptidase S1 spans 23 to 101; the sequence is VIGGDECNIN…PKKKYFFRCR (79 aa). A disulfide bridge connects residues cysteine 50 and cysteine 66. Histidine 65 serves as the catalytic Charge relay system.

Belongs to the peptidase S1 family. Snake venom subfamily. In terms of assembly, monomer. In terms of processing, glycosylated. Expressed by the venom gland.

It is found in the secreted. Strongly inactivated by diisopropylfluorophosphate (DFP) and phenylmethanesulfonyl fluoride (PMSF), and to a lesser extent by tosyl-L-lysine chloromethyl ketone (TLCK). Functionally, thrombin-like snake venom serine protease that releases specifically fibrinopeptide B from fibrinogen (FGB) to form fibrin clots. Shows a preferential cleavage at Arg-|-Gly bonds in fibrinogen beta chains. Cleaves fibrinogen beta chains preferentially to alpha chains. The polypeptide is Thrombin-like enzyme okinaxobin-1 (Ovophis okinavensis (Ryukyu Island pit viper)).